The primary structure comprises 113 residues: Hydrogenase maturation factor HypA (113 aa).

A Ni(2+)-binding site is contributed by His2. The Zn(2+) site is built by Cys73, Cys76, Cys89, and Cys92.

Belongs to the HypA/HybF family.

Functionally, involved in the maturation of [NiFe] hydrogenases. Required for nickel insertion into the metal center of the hydrogenase. The polypeptide is Hydrogenase maturation factor HypA (Cereibacter sphaeroides (Rhodobacter sphaeroides)).